Reading from the N-terminus, the 81-residue chain is Cell division protein ZapB (81 aa).

Residues 5 to 81 (LEVFEKLESK…QALLGRMEEV (77 aa)) are a coiled coil. The disordered stretch occupies residues 43 to 64 (VQSAQHGREELERENSQLKEQQ). Basic and acidic residues predominate over residues 48-59 (HGREELERENSQ).

This sequence belongs to the ZapB family. Homodimer. The ends of the coiled-coil dimer bind to each other, forming polymers. Interacts with FtsZ.

It is found in the cytoplasm. Its function is as follows. Non-essential, abundant cell division factor that is required for proper Z-ring formation. It is recruited early to the divisome by direct interaction with FtsZ, stimulating Z-ring assembly and thereby promoting cell division earlier in the cell cycle. Its recruitment to the Z-ring requires functional FtsA or ZipA. The polypeptide is Cell division protein ZapB (Klebsiella pneumoniae subsp. pneumoniae (strain ATCC 700721 / MGH 78578)).